The sequence spans 663 residues: 4-hydroxy-3-methylbut-2-en-1-yl diphosphate synthase (flavodoxin) (663 aa).

Positions 568, 571, 602, and 609 each coordinate [4Fe-4S] cluster.

The protein belongs to the IspG family. It depends on [4Fe-4S] cluster as a cofactor.

The catalysed reaction is (2E)-4-hydroxy-3-methylbut-2-enyl diphosphate + oxidized [flavodoxin] + H2O + 2 H(+) = 2-C-methyl-D-erythritol 2,4-cyclic diphosphate + reduced [flavodoxin]. It functions in the pathway isoprenoid biosynthesis; isopentenyl diphosphate biosynthesis via DXP pathway; isopentenyl diphosphate from 1-deoxy-D-xylulose 5-phosphate: step 5/6. In terms of biological role, converts 2C-methyl-D-erythritol 2,4-cyclodiphosphate (ME-2,4cPP) into 1-hydroxy-2-methyl-2-(E)-butenyl 4-diphosphate. This Leptospira borgpetersenii serovar Hardjo-bovis (strain L550) protein is 4-hydroxy-3-methylbut-2-en-1-yl diphosphate synthase (flavodoxin).